A 235-amino-acid polypeptide reads, in one-letter code: Small ribosomal subunit protein uS2c (235 aa).

It belongs to the universal ribosomal protein uS2 family.

It is found in the plastid. It localises to the chloroplast. This is Small ribosomal subunit protein uS2c (rps2) from Adiantum capillus-veneris (Maidenhair fern).